Here is a 471-residue protein sequence, read N- to C-terminus: Variant surface glycoprotein ILTAT 1.21 (471 aa).

Residues 1–21 (MLRALLPSTTLALILAGGGHA) form the signal peptide. N-linked (GlcNAc...) asparagine glycans are attached at residues Asn64 and Asn405. The tract at residues 406 to 449 (ATADECPETRCEYDSEKNECRPKKGTETTATGPGERTTPADGKA) is disordered. Residues 412–431 (PETRCEYDSEKNECRPKKGT) show a composition bias toward basic and acidic residues. Residue Asn450 is glycosylated (N-linked (GlcNAc...) asparagine). Residue Ser454 is the site of GPI-anchor amidated serine attachment. The propeptide at 455–471 (DSLLIKTSPLWLAFLLF) is removed in mature form.

The protein localises to the cell membrane. Its function is as follows. VSG forms a coat on the surface of the parasite. The trypanosome evades the immune response of the host by expressing a series of antigenically distinct VSGs from an estimated 1000 VSG genes. The protein is Variant surface glycoprotein ILTAT 1.21 of Trypanosoma brucei brucei.